The following is a 231-amino-acid chain: Transmembrane gamma-carboxyglutamic acid protein 3 (231 aa).

Residues 1–19 constitute a propeptide that is removed on maturation; the sequence is MAVFLEAKNAHAVLKRFPR. The Gla domain occupies 20-65; the sequence is ANEFLEELRQGTIERECMEEICSYEEVKEVFENKEKTMEFWKGYPN. The Extracellular segment spans residues 20-78; that stretch reads ANEFLEELRQGTIERECMEEICSYEEVKEVFENKEKTMEFWKGYPNAVYSVRDPSQSSD. Glu-22, Glu-25, Glu-26, Glu-33, Glu-35, Glu-38, Glu-39, Glu-44, Glu-45, Glu-48, Glu-51, Glu-54, and Glu-58 each carry 4-carboxyglutamate. Cys-36 and Cys-41 are disulfide-bonded. A helical transmembrane segment spans residues 79–101; that stretch reads AMYVVVPLLGVVLLIVIALFIIW. Topologically, residues 102–231 are cytoplasmic; sequence RCQLQKATRH…IVAASPSADK (130 aa). Disordered stretches follow at residues 140 to 165 and 184 to 231; these read HSQGESSGHREAGNNPQIVMGPSRGG and RLSS…SADK. The span at 201-212 shows a compositional bias: polar residues; it reads QEGSSEEASVSY.

Gla residues are produced after subsequent post-translational modifications of glutamate by a vitamin K-dependent gamma-carboxylase.

It is found in the membrane. The protein is Transmembrane gamma-carboxyglutamic acid protein 3 (Prrg3) of Mus musculus (Mouse).